A 218-amino-acid polypeptide reads, in one-letter code: Capsid protein (218 aa).

At methionine 1 the chain carries N-acetylmethionine; by host. The span at 1–10 (MDKSESTSAG) shows a compositional bias: low complexity. The disordered stretch occupies residues 1–29 (MDKSESTSAGRNRRRRLRRGSRSAPSSAD). The segment covering 11 to 21 (RNRRRRLRRGS) has biased composition (basic residues).

This sequence belongs to the cucumovirus capsid protein family.

The protein resides in the virion. In terms of biological role, capsid protein. Probably binds RNA and plays a role in packaging. The polypeptide is Capsid protein (Cucumis sativus (Cucumber)).